We begin with the raw amino-acid sequence, 352 residues long: Peptide chain release factor 1 (352 aa).

Glutamine 233 is modified (N5-methylglutamine). A disordered region spans residues 288–309; that stretch reads NAKDRKEQVGSGDRSERIRTYN. Over residues 289–306 the composition is skewed to basic and acidic residues; the sequence is AKDRKEQVGSGDRSERIR.

It belongs to the prokaryotic/mitochondrial release factor family. Post-translationally, methylated by PrmC. Methylation increases the termination efficiency of RF1.

Its subcellular location is the cytoplasm. Functionally, peptide chain release factor 1 directs the termination of translation in response to the peptide chain termination codons UAG and UAA. The chain is Peptide chain release factor 1 from Helicobacter pylori (strain HPAG1).